Consider the following 147-residue polypeptide: MSSEPPPPPQPPTHQASVGLLDTPRSRERSPSPLRGNVVPSPLPTRRTRTFSATVRASQGPVYKGVCKCFCRSKGHGFITPADGGPDIFLHISDVEGEYVPVEGDEVTYKMCSIPPKNEKLQAVEVVITHLAPGTKHETWSGHVISS.

Residues 1–12 (MSSEPPPPPQPP) show a composition bias toward pro residues. A disordered region spans residues 1 to 52 (MSSEPPPPPQPPTHQASVGLLDTPRSRERSPSPLRGNVVPSPLPTRRTRTFS). Ser2 bears the N-acetylserine mark. Phosphoserine is present on residues Ser30, Ser32, and Ser41. Thr45 carries the post-translational modification Phosphothreonine. Phosphoserine occurs at positions 52 and 58. The CSD domain maps to 62–129 (VYKGVCKCFC…KLQAVEVVIT (68 aa)). Ser146 and Ser147 each carry phosphoserine.

In terms of assembly, homodimer. Interacts with STYX. In terms of processing, dephosphorylated by calcineurin in a Ca(2+) dependent manner. Can be phosphorylated by DYRK2 (in vitro).

It localises to the cytoplasm. Its subcellular location is the P-body. The protein resides in the cytoplasmic granule. Binds mRNA and regulates the stability of target mRNA. Binds single-stranded DNA (in vitro). This chain is Calcium-regulated heat-stable protein 1 (CARHSP1), found in Homo sapiens (Human).